Consider the following 501-residue polypeptide: WD repeat-containing protein wdr-5.3 (501 aa).

Disordered regions lie at residues 1-35 (MNPE…LESN), 58-85 (PIGV…YQSH), and 155-197 (KSAE…ITKK). A compositionally biased stretch (polar residues) spans 22–35 (PNQQSLQSRMLESN). The span at 167 to 177 (SITTKPTSTIQ) shows a compositional bias: polar residues. WD repeat units follow at residues 211 to 241 (GHTK…KVWN), 253 to 283 (SHQL…KIFD), 295 to 325 (GHTN…RVWD), 337 to 367 (AHSD…RVWD), 381 to 410 (DHAP…KLWD), 422 to 455 (GHKN…LVWS), and 467 to 499 (GHTT…RIWR).

Belongs to the WD repeat WDR5/wds family.

In terms of biological role, not required for methylation of histone H3 'Lys-4'. The sequence is that of WD repeat-containing protein wdr-5.3 (wdr-5.3) from Caenorhabditis elegans.